We begin with the raw amino-acid sequence, 236 residues long: Orotidine 5'-phosphate decarboxylase (236 aa).

Substrate is bound by residues Asp-16, Lys-38, Asp-65–Thr-74, Thr-124, Arg-185, Gln-194, Gly-214, and Arg-215. The Proton donor role is filled by Lys-67.

This sequence belongs to the OMP decarboxylase family. Type 1 subfamily. In terms of assembly, homodimer.

The enzyme catalyses orotidine 5'-phosphate + H(+) = UMP + CO2. It functions in the pathway pyrimidine metabolism; UMP biosynthesis via de novo pathway; UMP from orotate: step 2/2. In terms of biological role, catalyzes the decarboxylation of orotidine 5'-monophosphate (OMP) to uridine 5'-monophosphate (UMP). The chain is Orotidine 5'-phosphate decarboxylase from Hydrogenovibrio crunogenus (strain DSM 25203 / XCL-2) (Thiomicrospira crunogena).